Here is a 298-residue protein sequence, read N- to C-terminus: Inosose dehydratase (298 aa).

Belongs to the IolE/MocC family. Requires glutathione as cofactor. Co(2+) is required as a cofactor. Mn(2+) serves as cofactor.

It catalyses the reaction scyllo-inosose = 3D-3,5/4-trihydroxycyclohexane-1,2-dione + H2O. Its pathway is polyol metabolism; myo-inositol degradation into acetyl-CoA; acetyl-CoA from myo-inositol: step 2/7. Its function is as follows. Catalyzes the dehydration of inosose (2-keto-myo-inositol, 2KMI or 2,4,6/3,5-pentahydroxycyclohexanone) to 3D-(3,5/4)-trihydroxycyclohexane-1,2-dione (D-2,3-diketo-4-deoxy-epi-inositol). The chain is Inosose dehydratase from Clostridium botulinum (strain Eklund 17B / Type B).